The following is a 306-amino-acid chain: Curved DNA-binding protein (306 aa).

The region spanning 5-69 is the J domain; sequence DYYAIMGVKP…QRRAEYDQMW (65 aa).

The protein localises to the cytoplasm. Its subcellular location is the nucleoid. Its function is as follows. DNA-binding protein that preferentially recognizes a curved DNA sequence. It is probably a functional analog of DnaJ; displays overlapping activities with DnaJ, but functions under different conditions, probably acting as a molecular chaperone in an adaptive response to environmental stresses other than heat shock. Lacks autonomous chaperone activity; binds native substrates and targets them for recognition by DnaK. Its activity is inhibited by the binding of CbpM. In Escherichia coli (strain SMS-3-5 / SECEC), this protein is Curved DNA-binding protein.